The following is a 239-amino-acid chain: DNA repair protein RecO (239 aa).

It belongs to the RecO family.

In terms of biological role, involved in DNA repair and RecF pathway recombination. The polypeptide is DNA repair protein RecO (Cereibacter sphaeroides (strain ATCC 17029 / ATH 2.4.9) (Rhodobacter sphaeroides)).